A 165-amino-acid chain; its full sequence is Protein AIG2 C (165 aa).

14–19 contacts substrate; the sequence is YGSILE. Catalysis depends on E82, which acts as the Proton acceptor.

The protein belongs to the gamma-glutamylcyclotransferase family. As to expression, expressed in floral organs, leaves, stems and roots.

Putative gamma-glutamylcyclotransferase. This chain is Protein AIG2 C, found in Arabidopsis thaliana (Mouse-ear cress).